We begin with the raw amino-acid sequence, 505 residues long: Glutamate--tRNA ligase (505 aa).

The 'HIGH' region signature appears at 12 to 22; the sequence is PSPTGALHIGG. The short motif at 260–264 is the 'KMSKS' region element; it reads KLSKR. Lys263 lines the ATP pocket.

This sequence belongs to the class-I aminoacyl-tRNA synthetase family. Glutamate--tRNA ligase type 1 subfamily. As to quaternary structure, monomer.

Its subcellular location is the cytoplasm. The catalysed reaction is tRNA(Glu) + L-glutamate + ATP = L-glutamyl-tRNA(Glu) + AMP + diphosphate. Its function is as follows. Catalyzes the attachment of glutamate to tRNA(Glu) in a two-step reaction: glutamate is first activated by ATP to form Glu-AMP and then transferred to the acceptor end of tRNA(Glu). This is Glutamate--tRNA ligase from Phocaeicola vulgatus (strain ATCC 8482 / DSM 1447 / JCM 5826 / CCUG 4940 / NBRC 14291 / NCTC 11154) (Bacteroides vulgatus).